Reading from the N-terminus, the 229-residue chain is HTH-type transcriptional regulator HbdR (229 aa).

The 61-residue stretch at 20-80 folds into the HTH tetR-type domain; the sequence is EERRHQIISA…LTLKNVLDTY (61 aa). The segment at residues 43–62 is a DNA-binding region (H-T-H motif); sequence TILQIAREAKVSTGLIYQYF.

Homodimer in solution.

Its activity is regulated as follows. Activity is regulated by the effector molecules 3-hydroxybenzoyl-CoA and benzoyl-CoA, which bind to HbdR, alleviating its repression on the three target promoters and inducing the expression of the hbd genes. Its function is as follows. Transcriptional regulator that controls the expression of the hbd cluster, which contains three catabolic operons and is responsible for the anaerobic degradation of 3-hydroxybenzoate. HbdR suppresses the activity of the three catabolic promoters (PhbdN, PhbdE and PhbdH) by binding to a conserved palindromic operator box. In addition, it slightly increases activity of its own promoter (PhbdR). The HbdR-mediated repression of hbd genes may play a crucial biological role in maintaining requisite hydroxybenzoate levels in the cell. The sequence is that of HTH-type transcriptional regulator HbdR from Aromatoleum sp. (strain CIB) (Azoarcus sp. (strain CIB)).